Here is a 347-residue protein sequence, read N- to C-terminus: Quinolinate synthase (347 aa).

His47 and Ser68 together coordinate iminosuccinate. Residue Cys113 coordinates [4Fe-4S] cluster. Iminosuccinate-binding positions include 139–141 (YAN) and Ser156. Cys200 provides a ligand contact to [4Fe-4S] cluster. Iminosuccinate-binding positions include 226–228 (HPE) and Thr243. A [4Fe-4S] cluster-binding site is contributed by Cys297.

Belongs to the quinolinate synthase family. Type 1 subfamily. [4Fe-4S] cluster is required as a cofactor.

Its subcellular location is the cytoplasm. It carries out the reaction iminosuccinate + dihydroxyacetone phosphate = quinolinate + phosphate + 2 H2O + H(+). The protein operates within cofactor biosynthesis; NAD(+) biosynthesis; quinolinate from iminoaspartate: step 1/1. Functionally, catalyzes the condensation of iminoaspartate with dihydroxyacetone phosphate to form quinolinate. The sequence is that of Quinolinate synthase from Escherichia coli O45:K1 (strain S88 / ExPEC).